Reading from the N-terminus, the 412-residue chain is Isocitrate dehydrogenase [NADP] (412 aa).

An NADP(+)-binding site is contributed by T100. D-threo-isocitrate contacts are provided by S109, N111, R115, R125, and R149. Residue D301 participates in Mg(2+) binding. Residues H333–Y339, N346, Y385, and R389 each bind NADP(+).

Belongs to the isocitrate and isopropylmalate dehydrogenases family. Homodimer. The cofactor is Mg(2+). It depends on Mn(2+) as a cofactor.

It carries out the reaction D-threo-isocitrate + NADP(+) = 2-oxoglutarate + CO2 + NADPH. Functionally, catalyzes the oxidative decarboxylation of isocitrate to 2-oxoglutarate and carbon dioxide with the concomitant reduction of NADP(+). NAD(+) can replace NADP(+) with low efficiency. The chain is Isocitrate dehydrogenase [NADP] from Archaeoglobus fulgidus (strain ATCC 49558 / DSM 4304 / JCM 9628 / NBRC 100126 / VC-16).